Here is a 160-residue protein sequence, read N- to C-terminus: Small ribosomal subunit protein bS6 (160 aa).

Belongs to the bacterial ribosomal protein bS6 family.

Functionally, binds together with bS18 to 16S ribosomal RNA. The polypeptide is Small ribosomal subunit protein bS6 (Ureaplasma parvum serovar 3 (strain ATCC 27815 / 27 / NCTC 11736)).